Consider the following 356-residue polypeptide: Phosphate acyltransferase (356 aa).

It belongs to the PlsX family. As to quaternary structure, homodimer. Probably interacts with PlsY.

It is found in the cytoplasm. It catalyses the reaction a fatty acyl-[ACP] + phosphate = an acyl phosphate + holo-[ACP]. It functions in the pathway lipid metabolism; phospholipid metabolism. Functionally, catalyzes the reversible formation of acyl-phosphate (acyl-PO(4)) from acyl-[acyl-carrier-protein] (acyl-ACP). This enzyme utilizes acyl-ACP as fatty acyl donor, but not acyl-CoA. The chain is Phosphate acyltransferase from Escherichia coli (strain K12 / DH10B).